Reading from the N-terminus, the 465-residue chain is Trigger factor (465 aa).

In terms of domain architecture, PPIase FKBP-type spans 163 to 248 (GDVINFNFKG…INKIKENQPA (86 aa)). The segment at 431 to 465 (EIVNKNQNDNEIEQDKEQKDNNEEKIKQENNLENK) is disordered. Basic and acidic residues predominate over residues 443-465 (EQDKEQKDNNEEKIKQENNLENK).

It belongs to the FKBP-type PPIase family. Tig subfamily.

The protein resides in the cytoplasm. The catalysed reaction is [protein]-peptidylproline (omega=180) = [protein]-peptidylproline (omega=0). Involved in protein export. Acts as a chaperone by maintaining the newly synthesized protein in an open conformation. Functions as a peptidyl-prolyl cis-trans isomerase. The polypeptide is Trigger factor (Mesomycoplasma hyopneumoniae (strain 232) (Mycoplasma hyopneumoniae)).